Here is a 191-residue protein sequence, read N- to C-terminus: Flavin reductase (NADH) (191 aa).

FAD is bound at residue 46-52; sequence YGLTCSA. Serine 55 lines the NAD(+) pocket. 72–73 lines the FAD pocket; it reads RV. NAD(+)-binding positions include histidine 144 and 166-169; that span reads YWRR.

It belongs to the non-flavoprotein flavin reductase family.

It carries out the reaction a reduced flavin + NAD(+) = an oxidized flavin + NADH + 2 H(+). Functionally, catalyzes the reduction of flavin by NADH. Subsequently, the reduced flavins is transferred to the tetracycline 7-halogenase CtcP. The chain is Flavin reductase (NADH) from Kitasatospora aureofaciens (Streptomyces aureofaciens).